Reading from the N-terminus, the 383-residue chain is Cytochrome b (383 aa).

The next 4 membrane-spanning stretches (helical) occupy residues 34–54, 78–99, 114–134, and 179–199; these read FGSL…FLMM, WLIR…FLHI, WNVG…GYVL, and FTAL…THLI. Residues His84 and His98 each contribute to the heme b site. Heme b contacts are provided by His183 and His197. Residue His202 participates in a ubiquinone binding. Helical transmembrane passes span 227–247, 289–309, 321–341, and 348–368; these read MKDV…ALYL, LGGV…PFLH, LSQL…WIGG, and YILL…ILMP.

This sequence belongs to the cytochrome b family. As to quaternary structure, the cytochrome bc1 complex contains 3 respiratory subunits (MT-CYB, CYC1 and UQCRFS1), 2 core proteins (UQCRC1 and UQCRC2) and probably 6 low-molecular weight proteins. It depends on heme b as a cofactor.

The protein localises to the mitochondrion inner membrane. Its function is as follows. Component of the ubiquinol-cytochrome c reductase complex (complex III or cytochrome b-c1 complex) that is part of the mitochondrial respiratory chain. The b-c1 complex mediates electron transfer from ubiquinol to cytochrome c. Contributes to the generation of a proton gradient across the mitochondrial membrane that is then used for ATP synthesis. This chain is Cytochrome b (MT-CYB), found in Caiman crocodilus (Spectacled caiman).